Here is a 710-residue protein sequence, read N- to C-terminus: E3 ubiquitin-protein ligase TRIM9 (710 aa).

The segment at Cys-10–Arg-50 adopts an RING-type zinc-finger fold. Thr-41 bears the Phosphothreonine mark. A phosphoserine mark is found at Ser-44, Ser-46, Ser-49, and Ser-53. B box-type zinc fingers lie at residues Ala-163–Pro-212 and Arg-224–Leu-266. Positions 168, 171, 193, 198, 229, 232, 252, and 258 each coordinate Zn(2+). The stretch at His-273–Lys-340 forms a coiled coil. The COS domain occupies Ile-374 to Val-432. The Fibronectin type-III domain occupies Val-440–Val-535. In terms of domain architecture, B30.2/SPRY spans Ser-533–Phe-702.

This sequence belongs to the TRIM/RBCC family. In terms of assembly, interacts with SNAP25. Post-translationally, auto-ubiquitinated.

The protein resides in the cytoplasm. The protein localises to the cell projection. Its subcellular location is the dendrite. It is found in the cytoplasmic vesicle. It localises to the secretory vesicle. The protein resides in the synaptic vesicle. The protein localises to the synapse. Its subcellular location is the cytoskeleton. It carries out the reaction S-ubiquitinyl-[E2 ubiquitin-conjugating enzyme]-L-cysteine + [acceptor protein]-L-lysine = [E2 ubiquitin-conjugating enzyme]-L-cysteine + N(6)-ubiquitinyl-[acceptor protein]-L-lysine.. It participates in protein modification; protein ubiquitination. E3 ubiquitin-protein ligase which ubiquitinates itself in cooperation with an E2 enzyme UBE2D2/UBC4 and serves as a targeting signal for proteasomal degradation. May play a role in regulation of neuronal functions. May act as a regulator of synaptic vesicle exocytosis by controlling the availability of SNAP25 for the SNARE complex formation. This Bos taurus (Bovine) protein is E3 ubiquitin-protein ligase TRIM9 (TRIM9).